The following is a 175-amino-acid chain: Shikimate kinase (175 aa).

Residue 11–16 participates in ATP binding; it reads GAGKTT. Residue Thr15 participates in Mg(2+) binding. The substrate site is built by Asp33, Arg57, and Gly79. Arg118 provides a ligand contact to ATP. Arg140 contributes to the substrate binding site.

It belongs to the shikimate kinase family. In terms of assembly, monomer. It depends on Mg(2+) as a cofactor.

It localises to the cytoplasm. It carries out the reaction shikimate + ATP = 3-phosphoshikimate + ADP + H(+). Its pathway is metabolic intermediate biosynthesis; chorismate biosynthesis; chorismate from D-erythrose 4-phosphate and phosphoenolpyruvate: step 5/7. In terms of biological role, catalyzes the specific phosphorylation of the 3-hydroxyl group of shikimic acid using ATP as a cosubstrate. In Bacteroides thetaiotaomicron (strain ATCC 29148 / DSM 2079 / JCM 5827 / CCUG 10774 / NCTC 10582 / VPI-5482 / E50), this protein is Shikimate kinase.